We begin with the raw amino-acid sequence, 540 residues long: Cytochrome P450 27C1 (540 aa).

Residue C486 coordinates heme.

It belongs to the cytochrome P450 family. Requires heme as cofactor. In terms of tissue distribution, following L-thyroxine, expressed in the retinal pigment epithelium (at protein level).

The protein localises to the membrane. The catalysed reaction is all-trans-retinol + 2 reduced [adrenodoxin] + O2 + 2 H(+) = all-trans-3,4-didehydroretinol + 2 oxidized [adrenodoxin] + 2 H2O. Its function is as follows. Efficiently catalyzes the conversion of all-trans retinol (also called vitamin A1, the precursor of 11-cis retinal) to 3,4-didehydroretinol (also called vitamin A2, the precursor of 11-cis 3,4-didehydroretinal). Also acts on all-trans retinal and all-trans retinoic acid. The replacement of 11-cis retinal chromophore in photopigments with 11-cis 3,4-didehydroretinal enhances sensitivity to long-wavelength light. This may improve vision in fresh water which is often turbid. The polypeptide is Cytochrome P450 27C1 (cyp27c1) (Danio rerio (Zebrafish)).